The chain runs to 594 residues: AT-rich interactive domain-containing protein 5A (594 aa).

Residues 1 to 56 (MAAPVKGNRKQSTEGDALDPPASPKPAGKQNGIQNPISLEDSPEAGGEREEEQERE) are disordered. The interval 1–300 (MAAPVKGNRK…AVHLPESPQS (300 aa)) is interaction with SOX9. Ser23 is subject to Phosphoserine. Residues 55-147 (REEEQAFLVS…LVLPYVRHLK (93 aa)) form the ARID domain. Residues Lys85 and Lys94 each participate in a glycyl lysine isopeptide (Lys-Gly) (interchain with G-Cter in ubiquitin) cross-link. The tract at residues 146 to 223 (LKGEDDKPLP…NSTEQQGLAS (78 aa)) is disordered. Positions 165–189 (MAKENRGDDGATERPKKAKEERRMD) are enriched in basic and acidic residues. Phosphoserine occurs at positions 256 and 289. 2 disordered regions span residues 281–331 (RHGA…EAQA) and 426–454 (AESP…GAAH). The segment covering 297 to 306 (SPQSPKGLTE) has biased composition (polar residues). A phosphoserine mark is found at Ser438 and Ser463.

Interacts with SOX9. Interacts with ESR1. Interacts with RORC. Phosphorylated by MAPK14 on serine residues involving a TLR4 signaling pathway upon lipopolysaccharide (LPS) stimulation leading to its ubiquitination and proteasomal degradation. In terms of processing, ubiquitinated leading to proteasomal degradation; involving WWP1 linked to MAPK14-mediated phosphorylation upon LPS stimulation.

The protein localises to the nucleus. Its function is as follows. DNA-binding protein that may regulate transcription and act as a repressor by binding to AT-rich stretches in the promoter region of target genes. May positively regulate chondrocyte-specific transcription such as of COL2A1 in collaboration with SOX9 and positively regulate histone H3 acetylation at chondrocyte-specific genes. May stimulate early-stage chondrocyte differentiation and inhibit later stage differention. Can repress ESR1-mediated transcriptional activation; proposed to act as corepressor for selective nuclear hormone receptors. As an RNA-binding protein, involved in the regulation of inflammatory response by stabilizing selective inflammation-related mRNAs, such as STAT3 and TBX21. Also stabilizes IL6 mRNA. Binds to stem loop structures located in the 3'UTRs of IL6, STAT3 and TBX21 mRNAs; at least for STAT3 prevents binding of ZC3H12A to the mRNA stem loop structure thus inhibiting its degradation activity. Contributes to elevated IL6 levels possibly implicated in autoimmunity processes. IL6-dependent stabilization of STAT3 mRNA may promote differentiation of naive CD4+ T-cells into T-helper Th17 cells. In CD4+ T-cells may also inhibit RORC-induced Th17 cell differentiation independently of IL6 signaling. Stabilization of TBX21 mRNA contributes to elevated interferon-gamma secretion in Th1 cells possibly implicated in the establishment of septic shock. Stabilizes TNFRSF4/OX40 mRNA by binding to the conserved stem loop structure in its 3'UTR; thereby competing with the mRNA-destabilizing functions of RC3H1 and endoribonuclease ZC3H12A. This is AT-rich interactive domain-containing protein 5A (ARID5A) from Homo sapiens (Human).